Here is a 466-residue protein sequence, read N- to C-terminus: Polycomb group protein FIE1 (466 aa).

Positions 1–10 are enriched in basic residues; it reads MGPTSRNHKS. A disordered region spans residues 1 to 71; that stretch reads MGPTSRNHKS…GEGEPQETVL (71 aa). A compositionally biased stretch (low complexity) spans 31–49; sequence SITASASASAFASPAVANS. 6 WD repeats span residues 167-209, 212-252, 258-298, 324-361, 374-414, and 421-460; these read DMNE…IYKS, GHGG…LILV, GHRH…EYVE, IHSN…ENPG, PECN…PVLI, and QVKS…TAPV.

The protein belongs to the WD repeat ESC family. Interacts with EZ1 and CLF. Component of the polycomb repressive complex 2 (PRC2), which methylates 'Lys-27' residues of histone H3 (H3K27me3), leading to transcriptional repression of the affected target gene. In terms of tissue distribution, expressed specifically in seed endosperm.

Its function is as follows. Polycomb group (PcG) protein. PcG proteins act by forming multiprotein complexes, which are required to maintain the transcriptionally repressive state of homeotic genes throughout development. PcG proteins are not required to initiate repression, but to maintain it during later stages of development. They act via the methylation of histones, rendering chromatin heritably changed in its expressibility. Together with EZ1 and CLF forms a complex that is involved in gene transcriptional repression by trimethylation on histone H3 'Lys-27' (H3K27me3) of target genes. Involved in the regulation of embryo and seed endosperm development. FIE1-containing PcG complex in seed endosperm regulates the expression of various transcription factors by trimethylation on histone H3 'Lys-27' (H3K27me3) of target genes. Involved in the overall expression regulation of nutrient metabolism genes, such as prolamin synthesis and seed storage protein synthesis genes. Can regulate valine, leucine and isoleucine metabolism-related genes. The chain is Polycomb group protein FIE1 from Oryza sativa subsp. japonica (Rice).